The following is a 197-amino-acid chain: ATP synthase protein MI25 (197 aa).

The helical transmembrane segment at 30–50 (ISIYNEEMIVARCFIGFLIFS) threads the bilayer.

It belongs to the ATPase protein MI25 family. In terms of assembly, F-type ATPases have 2 components, CF(1) - the catalytic core - and CF(0) - the membrane proton channel. CF(1) has five subunits: alpha(3), beta(3), gamma(1), delta(1), epsilon(1). CF(0) has three main subunits: a, b and c.

It localises to the mitochondrion membrane. This is one of the chains of the nonenzymatic component (CF(0) subunit) of the mitochondrial ATPase complex. The protein is ATP synthase protein MI25 of Oryza sativa subsp. indica (Rice).